We begin with the raw amino-acid sequence, 344 residues long: Dihydroorotate dehydrogenase (quinone) (344 aa).

FMN contacts are provided by residues 65 to 69 (AGLDK) and Thr89. Lys69 contacts substrate. Residue 114–118 (NRMGF) participates in substrate binding. The FMN site is built by Asn145 and Asn178. Asn178 contacts substrate. Ser181 serves as the catalytic Nucleophile. Asn183 serves as a coordination point for substrate. Residues Lys223 and Thr251 each coordinate FMN. A substrate-binding site is contributed by 252–253 (NT). Residues Gly274, Gly303, and 324 to 325 (YS) each bind FMN.

Belongs to the dihydroorotate dehydrogenase family. Type 2 subfamily. As to quaternary structure, monomer. Requires FMN as cofactor.

The protein localises to the cell membrane. The catalysed reaction is (S)-dihydroorotate + a quinone = orotate + a quinol. Its pathway is pyrimidine metabolism; UMP biosynthesis via de novo pathway; orotate from (S)-dihydroorotate (quinone route): step 1/1. Its function is as follows. Catalyzes the conversion of dihydroorotate to orotate with quinone as electron acceptor. The polypeptide is Dihydroorotate dehydrogenase (quinone) (Cupriavidus necator (strain ATCC 17699 / DSM 428 / KCTC 22496 / NCIMB 10442 / H16 / Stanier 337) (Ralstonia eutropha)).